Reading from the N-terminus, the 769-residue chain is Portal protein (769 aa).

Positions 458–479 (LEGYVNNLFKTIEGLKDVNSDL) are putative leucine zipper motif. 2 disordered regions span residues 654–675 (RGPR…DDER) and 750–769 (RQLT…DRRS). A compositionally biased stretch (basic and acidic residues) spans 760–769 (VGCERRDRRS).

The protein belongs to the herpesviridae portal protein family. In terms of assembly, homododecamerizes. Interacts with terminase subunits TRM1 and TRM3.

Its subcellular location is the virion. It is found in the host nucleus. Its function is as follows. Forms a portal in the viral capsid through which viral DNA is translocated during DNA packaging. Assembles as a dodecamer at a single fivefold axe of the T=16 icosahedric capsid. Binds to the molecular motor that translocates the viral DNA, termed terminase. This is Portal protein (54) from Homo sapiens (Human).